We begin with the raw amino-acid sequence, 887 residues long: DNA gyrase subunit A (887 aa).

One can recognise a Topo IIA-type catalytic domain in the interval 35 to 501 (LPDVRDGLKP…GFENLEDEDL (467 aa)). Tyrosine 123 (O-(5'-phospho-DNA)-tyrosine intermediate) is an active-site residue. The GyrA-box signature appears at 528–534 (QNRGGRG). Positions 811–864 (KEDAEDETNEDEQSTSTVSEDGTEQQREAVVNDETPGNAIHTEVIDSEENDEDG) are disordered. Residues 813-823 (DAEDETNEDEQ) are compositionally biased toward acidic residues.

The protein belongs to the type II topoisomerase GyrA/ParC subunit family. As to quaternary structure, heterotetramer, composed of two GyrA and two GyrB chains. In the heterotetramer, GyrA contains the active site tyrosine that forms a transient covalent intermediate with DNA, while GyrB binds cofactors and catalyzes ATP hydrolysis.

The protein resides in the cytoplasm. It carries out the reaction ATP-dependent breakage, passage and rejoining of double-stranded DNA.. In terms of biological role, a type II topoisomerase that negatively supercoils closed circular double-stranded (ds) DNA in an ATP-dependent manner to modulate DNA topology and maintain chromosomes in an underwound state. Negative supercoiling favors strand separation, and DNA replication, transcription, recombination and repair, all of which involve strand separation. Also able to catalyze the interconversion of other topological isomers of dsDNA rings, including catenanes and knotted rings. Type II topoisomerases break and join 2 DNA strands simultaneously in an ATP-dependent manner. The polypeptide is DNA gyrase subunit A (Staphylococcus aureus (strain COL)).